A 213-amino-acid chain; its full sequence is Uridine kinase (213 aa).

15–22 (GASASGKS) is an ATP binding site.

The protein belongs to the uridine kinase family.

It is found in the cytoplasm. The catalysed reaction is uridine + ATP = UMP + ADP + H(+). The enzyme catalyses cytidine + ATP = CMP + ADP + H(+). It participates in pyrimidine metabolism; CTP biosynthesis via salvage pathway; CTP from cytidine: step 1/3. The protein operates within pyrimidine metabolism; UMP biosynthesis via salvage pathway; UMP from uridine: step 1/1. The sequence is that of Uridine kinase from Pectobacterium atrosepticum (strain SCRI 1043 / ATCC BAA-672) (Erwinia carotovora subsp. atroseptica).